Consider the following 434-residue polypeptide: Glutamate-1-semialdehyde 2,1-aminomutase (434 aa).

K274 carries the post-translational modification N6-(pyridoxal phosphate)lysine.

Belongs to the class-III pyridoxal-phosphate-dependent aminotransferase family. HemL subfamily. In terms of assembly, homodimer. Pyridoxal 5'-phosphate serves as cofactor.

The protein resides in the cytoplasm. The enzyme catalyses (S)-4-amino-5-oxopentanoate = 5-aminolevulinate. It functions in the pathway porphyrin-containing compound metabolism; protoporphyrin-IX biosynthesis; 5-aminolevulinate from L-glutamyl-tRNA(Glu): step 2/2. This chain is Glutamate-1-semialdehyde 2,1-aminomutase, found in Acidovorax ebreus (strain TPSY) (Diaphorobacter sp. (strain TPSY)).